The primary structure comprises 570 residues: Peptidyl-prolyl cis-trans isomerase CYP63 (570 aa).

Residues 10-174 (FLDVSIGGDP…SPVKIIDCGE (165 aa)) enclose the PPIase cyclophilin-type domain. Positions 180–570 (AHDAAEREKG…GKRGLVSYAD (391 aa)) are disordered. Basic and acidic residues predominate over residues 203–219 (VSDREAKETRKKESNEK). Low complexity-rich tracts occupy residues 229–238 (SSDSYSSSSD) and 246–259 (EAYSSSSYESSSSS). The span at 262–292 (KHRKRKSTTRHKGRRGERKSKGRSGKKKARP) shows a compositional bias: basic residues. Positions 297-309 (STNSSSDTESSSS) are enriched in low complexity. Residues 323-339 (VKVDNADQHANLDDSVK) show a composition bias toward basic and acidic residues. The residue at position 340 (Ser340) is a Phosphoserine. Basic residues predominate over residues 340-351 (SRSRSPIRRRNQ). The span at 352–365 (NSRSKSPSRSPVRV) shows a compositional bias: low complexity. Basic and acidic residues-rich tracts occupy residues 387–397 (SPREKPTEETV) and 437–467 (SPPRHWPDRRNFQDRNRDRYPSNRSYSERSP). Over residues 468–490 (RGRFRSPPRRRSPPRYNRRRRST) the composition is skewed to basic residues. Over residues 495–505 (DGYRRRLRDGS) the composition is skewed to basic and acidic residues. Residues 509–523 (SPRHRSRSQSPRKRQ) show a composition bias toward basic residues. Low complexity predominate over residues 546 to 555 (SPAESLSPSH).

The protein belongs to the cyclophilin-type PPIase family. As to quaternary structure, interacts with SNRNP35, RNU1, SCL28, SCL30, SR30 and SR34. The binding to SR34 is phosphorylation-dependent. Ubiquitous.

Its subcellular location is the nucleus. It localises to the nucleoplasm. The protein localises to the nucleus speckle. It catalyses the reaction [protein]-peptidylproline (omega=180) = [protein]-peptidylproline (omega=0). Functionally, PPIases accelerate the folding of proteins. It catalyzes the cis-trans isomerization of proline imidic peptide bonds in oligopeptides. May be implicated in the folding, transport, and assembly of proteins. Probably involved in early steps of spliceosomal assembly. This is Peptidyl-prolyl cis-trans isomerase CYP63 (CYP63) from Arabidopsis thaliana (Mouse-ear cress).